Here is a 166-residue protein sequence, read N- to C-terminus: MSPKKAKKRLEGGSSNVFSMFEQTQIQEFKEAFTIMDQNRDGFIDKNDLRDTFAALGRVNVKNEEIDEMIKEAPGPINFTVFLTMFGEKLKGADPEETILNAFKVFDPEGKGSLKADYVREMLTTQAERFSKEEIDQMFAAFPPDVTGNLDYKNLVHIITHGEEKD.

N,N,N-trimethylserine is present on Ser-2. Phosphoserine is present on residues Ser-14, Ser-15, and Ser-19. 3 EF-hand domains span residues 24-59 (TQIQ…LGRV), 94-129 (DPEE…QAER), and 130-165 (FSKE…GEEK). Ca(2+)-binding residues include Asp-37, Asn-39, Asp-41, and Asp-48. Position 52 is a phosphothreonine (Thr-52).

In terms of assembly, myosin is a hexamer of 2 heavy chains and 4 light chains. Interacts with MYOC. Post-translationally, N-terminus is methylated by METTL11A/NTM1. Phosphorylated by MYLK3 and MYLK2; promotes cardiac muscle contraction and function. Dephosphorylated by PPP1CB complexed to PPP1R12B. The phosphorylated form in adult is expressed as gradients across the heart from endocardium (low phosphorylation) to epicardium (high phosphorylation); regulates cardiac torsion and workload distribution. In terms of tissue distribution, abundantly expressed in both cardiac and slow skeletal muscle (soleus), with no detectable expression in fast skeletal muscle (vastus lateralis) or non-muscle tissue.

It localises to the cytoplasm. Its subcellular location is the myofibril. The protein localises to the sarcomere. The protein resides in the a band. Contractile protein that plays a role in heart development and function. Following phosphorylation, plays a role in cross-bridge cycling kinetics and cardiac muscle contraction by increasing myosin lever arm stiffness and promoting myosin head diffusion; as a consequence of the increase in maximum contraction force and calcium sensitivity of contraction force. These events altogether slow down myosin kinetics and prolong duty cycle resulting in accumulated myosins being cooperatively recruited to actin binding sites to sustain thin filament activation as a means to fine-tune myofilament calcium sensitivity to force. During cardiogenesis plays an early role in cardiac contractility by promoting cardiac myofibril assembly. The polypeptide is Myosin regulatory light chain 2, ventricular/cardiac muscle isoform (Rattus norvegicus (Rat)).